We begin with the raw amino-acid sequence, 217 residues long: Probable transaldolase (217 aa).

The Schiff-base intermediate with substrate role is filled by K83.

The protein belongs to the transaldolase family. Type 3B subfamily.

The protein resides in the cytoplasm. The catalysed reaction is D-sedoheptulose 7-phosphate + D-glyceraldehyde 3-phosphate = D-erythrose 4-phosphate + beta-D-fructose 6-phosphate. It functions in the pathway carbohydrate degradation; pentose phosphate pathway; D-glyceraldehyde 3-phosphate and beta-D-fructose 6-phosphate from D-ribose 5-phosphate and D-xylulose 5-phosphate (non-oxidative stage): step 2/3. Its function is as follows. Transaldolase is important for the balance of metabolites in the pentose-phosphate pathway. This chain is Probable transaldolase, found in Phenylobacterium zucineum (strain HLK1).